The chain runs to 417 residues: Imidazolonepropionase (417 aa).

The Fe(3+) site is built by His-80 and His-82. Zn(2+) contacts are provided by His-80 and His-82. 3 residues coordinate 4-imidazolone-5-propanoate: Arg-89, Tyr-152, and His-187. An N-formimidoyl-L-glutamate-binding site is contributed by Tyr-152. His-252 lines the Fe(3+) pocket. His-252 contacts Zn(2+). Glu-255 contacts 4-imidazolone-5-propanoate. A Fe(3+)-binding site is contributed by Asp-326. Asp-326 serves as a coordination point for Zn(2+). The N-formimidoyl-L-glutamate site is built by Asn-328 and Gly-330. Residue Ser-331 participates in 4-imidazolone-5-propanoate binding.

It belongs to the metallo-dependent hydrolases superfamily. HutI family. The cofactor is Zn(2+). It depends on Fe(3+) as a cofactor.

The protein localises to the cytoplasm. The catalysed reaction is 4-imidazolone-5-propanoate + H2O = N-formimidoyl-L-glutamate. It functions in the pathway amino-acid degradation; L-histidine degradation into L-glutamate; N-formimidoyl-L-glutamate from L-histidine: step 3/3. Its function is as follows. Catalyzes the hydrolytic cleavage of the carbon-nitrogen bond in imidazolone-5-propanoate to yield N-formimidoyl-L-glutamate. It is the third step in the universal histidine degradation pathway. The chain is Imidazolonepropionase from Bacteroides fragilis (strain ATCC 25285 / DSM 2151 / CCUG 4856 / JCM 11019 / LMG 10263 / NCTC 9343 / Onslow / VPI 2553 / EN-2).